Reading from the N-terminus, the 253-residue chain is Mediator of RNA polymerase II transcription subunit 10 (253 aa).

Disordered stretches follow at residues 32–63 (YDTNPSSSNNNTPTSSRASGGGGGGGGGHASS), 88–109 (LPSSPSSGPSNNQPQQGTTELE), and 206–253 (VEAT…QSGQ). A compositionally biased stretch (low complexity) spans 34–47 (TNPSSSNNNTPTSS). Residues 50–60 (SGGGGGGGGGH) are compositionally biased toward gly residues. The segment covering 88–104 (LPSSPSSGPSNNQPQQG) has biased composition (low complexity). The segment covering 231–253 (SAGGEGQQGQGQGQQGQGQQSGQ) has biased composition (gly residues).

The protein belongs to the Mediator complex subunit 10 family. As to quaternary structure, component of the Mediator complex.

It is found in the nucleus. Component of the Mediator complex, a coactivator involved in the regulated transcription of nearly all RNA polymerase II-dependent genes. Mediator functions as a bridge to convey information from gene-specific regulatory proteins to the basal RNA polymerase II transcription machinery. Mediator is recruited to promoters by direct interactions with regulatory proteins and serves as a scaffold for the assembly of a functional preinitiation complex with RNA polymerase II and the general transcription factors. This chain is Mediator of RNA polymerase II transcription subunit 10 (nut2), found in Neurospora crassa (strain ATCC 24698 / 74-OR23-1A / CBS 708.71 / DSM 1257 / FGSC 987).